A 286-amino-acid chain; its full sequence is Bark leucoagglutinin (286 aa).

The signal sequence occupies residues 1-28; sequence ATSNSKPTQVLLATFLTFFFLLLNNVNS. N-acetyl-alpha-neuraminyl-(2-&gt;3)-beta-D-galactosyl-(1-&gt;4)-beta-D-glucose is bound at residue Tyr73. A glycan (N-linked (GlcNAc...) asparagine) is linked at Asn89. The N-acetyl-alpha-neuraminyl-(2-&gt;3)-beta-D-galactosyl-(1-&gt;4)-beta-D-glucose site is built by Asp115 and Lys135. Asn141 carries N-linked (GlcNAc...) asparagine glycosylation. Mn(2+) is bound by residues Glu155 and Asp157. Residues Asp157, Tyr159, Asp165, and Asp168 each coordinate Ca(2+). Tyr159 and Asp165 together coordinate N-acetyl-alpha-neuraminyl-(2-&gt;3)-beta-D-galactosyl-(1-&gt;4)-beta-D-glucose. Asp168 and His173 together coordinate Mn(2+). N-linked (GlcNAc...) asparagine glycans are attached at residues Asn207 and Asn219. A propeptide spans 278 to 286 (removed in mature form); the sequence is NVHIARYTA.

Belongs to the leguminous lectin family.

In terms of biological role, sialic acid-binding lectin specifically recognizing the trisaccharide sequence Neu5Ac/Gc-alpha-2,3-Gal-beta-1,4-GlcNAc/Glc. In Maackia amurensis (Amur maackia), this protein is Bark leucoagglutinin.